The sequence spans 298 residues: Succinate dehydrogenase [ubiquinone] iron-sulfur subunit, mitochondrial (298 aa).

The 2Fe-2S ferredoxin-type domain occupies 59 to 147 (YRFNPEAPGA…STKIYPLPHM (89 aa)). [2Fe-2S] cluster contacts are provided by cysteine 107, cysteine 112, cysteine 115, and cysteine 127. In terms of domain architecture, 4Fe-4S ferredoxin-type spans 190 to 220 (ERDRLDGLYECILCACCSTSCPSYWWNADKY). Residues cysteine 200, cysteine 203, and cysteine 206 each coordinate [4Fe-4S] cluster. Cysteine 210 provides a ligand contact to [3Fe-4S] cluster. Residue tryptophan 215 coordinates a ubiquinone. 2 residues coordinate [3Fe-4S] cluster: cysteine 257 and cysteine 263. Cysteine 267 contacts [4Fe-4S] cluster.

The protein belongs to the succinate dehydrogenase/fumarate reductase iron-sulfur protein family. As to quaternary structure, component of complex II composed of four subunits: a flavoprotein (FP), an iron-sulfur protein (IP), and a cytochrome b composed of a large and a small subunit. It depends on [2Fe-2S] cluster as a cofactor. Requires [3Fe-4S] cluster as cofactor. [4Fe-4S] cluster serves as cofactor.

Its subcellular location is the mitochondrion inner membrane. It catalyses the reaction a quinone + succinate = fumarate + a quinol. It participates in carbohydrate metabolism; tricarboxylic acid cycle; fumarate from succinate (eukaryal route): step 1/1. Iron-sulfur protein (IP) subunit of succinate dehydrogenase (SDH) that is involved in complex II of the mitochondrial electron transport chain and is responsible for transferring electrons from succinate to ubiquinone (coenzyme Q). This is Succinate dehydrogenase [ubiquinone] iron-sulfur subunit, mitochondrial (sdhb-1) from Caenorhabditis elegans.